The primary structure comprises 251 residues: Adenosylcobinamide-GDP ribazoletransferase (251 aa).

Transmembrane regions (helical) follow at residues 36 to 56 (LYPFIGLIIGILWYLSFFVLS), 60 to 80 (VPIMLMAALILTVPYILTGFL), 110 to 130 (VGAFSVISVVLLLLVEFAGIF), 181 to 201 (EIILLGIYVLVALITFFTLGI), 202 to 222 (NYLIAILAMGLISFILLLKVK), and 231 to 251 (DVAGYILVLMEFTGILLLGII).

It belongs to the CobS family. Mg(2+) serves as cofactor.

Its subcellular location is the cell membrane. It catalyses the reaction alpha-ribazole + adenosylcob(III)inamide-GDP = adenosylcob(III)alamin + GMP + H(+). The enzyme catalyses alpha-ribazole 5'-phosphate + adenosylcob(III)inamide-GDP = adenosylcob(III)alamin 5'-phosphate + GMP + H(+). It functions in the pathway cofactor biosynthesis; adenosylcobalamin biosynthesis; adenosylcobalamin from cob(II)yrinate a,c-diamide: step 7/7. Joins adenosylcobinamide-GDP and alpha-ribazole to generate adenosylcobalamin (Ado-cobalamin). Also synthesizes adenosylcobalamin 5'-phosphate from adenosylcobinamide-GDP and alpha-ribazole 5'-phosphate. The polypeptide is Adenosylcobinamide-GDP ribazoletransferase (Clostridium perfringens (strain SM101 / Type A)).